A 773-amino-acid chain; its full sequence is Mitochondrial 15S rRNA processing factor CCM1 (773 aa).

Residues 1 to 23 (MLRARLLVPLVRPALVHRLDRCY) constitute a mitochondrion transit peptide. Residues 89 to 106 (AAEATEQHKELPPAEQER) show a composition bias toward basic and acidic residues. Residues 89-122 (AAEATEQHKELPPAEQERPSGANTHTAPIKHDTK) form a disordered region. 5 PPR repeats span residues 220-254 (SAIT…NITP), 255-285 (TVHT…LKLA), 294-328 (NQVI…SLET), 331-365 (TAHT…SVAN), and 366-400 (VRTY…HSES).

The protein belongs to the CCM1 family. In terms of assembly, binds to mitochondrial small subunit 15S rRNA.

It is found in the mitochondrion. In terms of biological role, regulates mitochondrial small subunit maturation by controlling 15S rRNA 5'-end processing. Localizes to the 5' precursor of the 15S rRNA in a position that is subsequently occupied by mS47 in the mature yeast mtSSU. Uses structure and sequence-specific RNA recognition, binding to a single-stranded region of the precursor and specifically recognizing bases -6 to -1. The exchange of Ccm1 for mS47 is coupled to the irreversible removal of precursor rRNA that is accompanied by conformational changes of the mitoribosomal proteins uS5m and mS26. These conformational changes signal completion of 5'-end rRNA processing through protection of the mature 5'-end of the 15S rRNA and stabilization of mS47. The removal of the 5' precursor together with the dissociation of Ccm1 may be catalyzed by the 5'-3' exoribonuclease Pet127. Involved in the specific removal of group I introns in mitochondrial encoded transcripts. The chain is Mitochondrial 15S rRNA processing factor CCM1 (CCM1) from Yarrowia lipolytica (strain CLIB 122 / E 150) (Yeast).